Consider the following 617-residue polypeptide: V-type proton ATPase catalytic subunit A (617 aa).

An ATP-binding site is contributed by 250 to 257 (GAFGCGKT).

The protein belongs to the ATPase alpha/beta chains family. In terms of assembly, V-ATPase is a heteromultimeric enzyme made up of two complexes: the ATP-hydrolytic V1 complex and the proton translocation V0 complex. The V1 complex consists of three catalytic AB heterodimers that form a heterohexamer, three peripheral stalks each consisting of EG heterodimers, one central rotor including subunits D and F, and the regulatory subunits C and H. The proton translocation complex V0 consists of the proton transport subunit a, a ring of proteolipid subunits c9c'', rotary subunit d, subunits e and f, and the accessory subunits VhaAC45 and ATP6AP2.

The catalysed reaction is ATP + H2O + 4 H(+)(in) = ADP + phosphate + 5 H(+)(out). Its activity is regulated as follows. ATP hydrolysis occurs at the interface between the nucleotide-binding domains of subunits A and B. ATP hydrolysis triggers a conformational change in the subunits D and F, which induces a shift of subunit d. The c-ring is subsequently rotated and results in a continuous proton translocation across the membrane. In terms of biological role, catalytic subunit of the V1 complex of vacuolar(H+)-ATPase (V-ATPase), a multisubunit enzyme composed of a peripheral complex (V1) that hydrolyzes ATP and a membrane integral complex (V0) that translocates protons. V-ATPase is responsible for acidifying and maintaining the pH of intracellular compartments and in some cell types, is targeted to the plasma membrane, where it is responsible for acidifying the extracellular environment. The sequence is that of V-type proton ATPase catalytic subunit A (VHAA) from Manduca sexta (Tobacco hawkmoth).